The following is a 448-amino-acid chain: Putative vacuolar cation/proton exchanger 6 (448 aa).

Residues 31-81 are Cytoplasmic-facing; the sequence is MGLVNEVELKSLLEQETDSPQTNAASLMEQGSLRERRAKAPRNSVVQSFKI. The helical transmembrane segment at 82–102 threads the bilayer; the sequence is VILSNKLNLLLPFGPLAILVH. Residues 103-109 are Extracellular-facing; sequence YLTDNKG. Residues 110–130 traverse the membrane as a helical segment; that stretch reads WFFLLSLVGITPLAERLGYAT. Over 131 to 141 the chain is Cytoplasmic; sequence EQLSCYTGATV. Residues 142-162 traverse the membrane as a helical segment; that stretch reads GGLLNATFGNVIELIISIIAL. The segment at 150–185 is cation selection; sequence GNVIELIISIIALKNGMIRVVQLTLLGSILSNILLV. Over 163–178 the chain is Extracellular; the sequence is KNGMIRVVQLTLLGSI. A helical transmembrane segment spans residues 179 to 199; sequence LSNILLVLGCAFFCGGLVFPG. The Cytoplasmic segment spans residues 200–209; it reads KDQVFDKRNA. The chain crosses the membrane as a helical span at residues 210–230; sequence VVSSGMLLMAVMGLLFPTFLH. The Extracellular segment spans residues 231–243; the sequence is YTHSEVHAGSSEL. The chain crosses the membrane as a helical span at residues 244–264; it reads ALSRFISCIMLVAYAAYLFFQ. Over 265-295 the chain is Cytoplasmic; that stretch reads LKSQPSFYTEKTNQNEETSNDDEDPEISKWE. A helical membrane pass occupies residues 296 to 316; sequence AIIWLSIFTAWVSLLSGYLVD. Topologically, residues 317–334 are extracellular; sequence AIEGTSVSWKIPISFISV. The chain crosses the membrane as a helical span at residues 335–355; the sequence is ILLPIVGNAAEHAGAIMFAMK. The interval 341 to 376 is cation selection; that stretch reads GNAAEHAGAIMFAMKDKLDLSLGVAIGSSIQISMFA. Topologically, residues 356-363 are cytoplasmic; sequence DKLDLSLG. A helical membrane pass occupies residues 364–384; that stretch reads VAIGSSIQISMFAVPFCVVIG. Residues 385-393 are Extracellular-facing; that stretch reads WMMGAQMDL. A helical transmembrane segment spans residues 394 to 414; that stretch reads NLQLFETATLLITVIVVAFFL. Over 415–425 the chain is Cytoplasmic; that stretch reads QLEGTSNYFKR. A helical membrane pass occupies residues 426-446; that stretch reads LMLILCYLIVAASFFVHEDPH. Residues 447–448 are Extracellular-facing; that stretch reads QG.

The protein belongs to the Ca(2+):cation antiporter (CaCA) (TC 2.A.19) family. Cation/proton exchanger (CAX) subfamily.

The protein localises to the vacuole membrane. Vacuolar cation/proton exchanger (CAX). Translocates Ca(2+) and other metal ions into vacuoles using the proton gradient formed by H(+)-ATPase and H(+)-pyrophosphatase. This Arabidopsis thaliana (Mouse-ear cress) protein is Putative vacuolar cation/proton exchanger 6 (CAX6).